The following is a 318-amino-acid chain: Cytochrome f (318 aa).

Residues 1-34 (MQNRNFFEYPKNWIILLIPIFTTFNLLFTSDCYA) form the signal peptide. The heme site is built by Phe-35, Cys-55, Cys-58, and His-59. The chain crosses the membrane as a helical span at residues 284 to 303 (LQGLLVFLFLVVLAQVFLVL).

Belongs to the cytochrome f family. In terms of assembly, the 4 large subunits of the cytochrome b6-f complex are cytochrome b6, subunit IV (17 kDa polypeptide, petD), cytochrome f and the Rieske protein, while the 4 small subunits are PetG, PetL, PetM and PetN. The complex functions as a dimer. Heme serves as cofactor.

It is found in the plastid. The protein localises to the chloroplast thylakoid membrane. Component of the cytochrome b6-f complex, which mediates electron transfer between photosystem II (PSII) and photosystem I (PSI), cyclic electron flow around PSI, and state transitions. The sequence is that of Cytochrome f from Chaetosphaeridium globosum (Charophycean green alga).